The chain runs to 705 residues: Elongation factor G (705 aa).

Positions 8–290 constitute a tr-type G domain; that stretch reads ERYRNFGIMA…GVVHLLPSPA (283 aa). GTP contacts are provided by residues 17–24, 88–92, and 142–145; these read AHIDAGKT, DTPGH, and NKMD. The segment at 290–309 is disordered; it reads ADRPPVQGIDEDEKEDTRAA.

It belongs to the TRAFAC class translation factor GTPase superfamily. Classic translation factor GTPase family. EF-G/EF-2 subfamily.

It localises to the cytoplasm. In terms of biological role, catalyzes the GTP-dependent ribosomal translocation step during translation elongation. During this step, the ribosome changes from the pre-translocational (PRE) to the post-translocational (POST) state as the newly formed A-site-bound peptidyl-tRNA and P-site-bound deacylated tRNA move to the P and E sites, respectively. Catalyzes the coordinated movement of the two tRNA molecules, the mRNA and conformational changes in the ribosome. In Xanthomonas axonopodis pv. citri (strain 306), this protein is Elongation factor G.